Reading from the N-terminus, the 293-residue chain is MSDTNYAVIYDLHSHTTASDGCLTPEALVHRAVEMRVGTLAITDHDTTAAIAPAREEISRSGLALNLIPGVEISTVWENHEIHIVGLNIDITHPLMCEFLAQQTERRNQRAQLIAERLEKAQIPGALEGAQRLAQGGAVTRGHFARFLVECGKASSMADVFKKYLARGKTGYVPPQWCTIEQAIDVIHHSGGKAVLAHPGRYNLSAKWLKRLVAHFAEHHGDAMEVAQCQQSPNERTQLAALARQHHLWASQGSDFHQPCPWIELGRKLWLPAGVEGVWQLWEQPQNTTEREL.

His-13, His-15, Asp-20, His-45, Glu-72, His-83, His-198, Asp-255, and His-257 together coordinate Mn(2+).

The protein belongs to the PHP family. TrpH/YciV subfamily. It depends on Mn(2+) as a cofactor.

The catalysed reaction is a ribonucleoside 3',5'-bisphosphate + H2O = a ribonucleoside 5'-phosphate + phosphate. In terms of biological role, exoribonuclease that catalyzes the last steps of 5S, 16S and 23S rRNA 5'-end maturation. Removes 3 nucleotides (nt) from the 5' end of 5S, 16S and 23S rRNA precursors to generate the mature 5' ends. Precursors with longer extensions are not processed (7 nt at the 5' end of pre-23S rRNA or 66 nt at the 5'-end of 16S rRNA are not processed). 5S and 23S rRNA maturation occurs more efficiently and accurately on ribosomal particles as compared to free RNA; the enzyme overdigests free RNA but generates the correct 5'-end in ribosomes from rnm deletion strains. Efficiently catalyzes the hydrolysis of the 3'-phosphate from 3',5'-bis-phosphonucleotides as well as the successive hydrolysis of 5'-phosphomononucleotides from the 5'-end of short pieces of RNA and DNA, with no specificity toward the identity of the nucleotide base. Is more efficient at hydrolyzing RNA oligonucleotides than DNA oligonucleotides. This enzyme can also hydrolyze annealed DNA duplexes, albeit at a catalytic efficiency approximately 10-fold lower than that of the corresponding single-stranded oligonucleotides. The chain is 5'-3' exoribonuclease Rnm from Escherichia coli (strain K12).